A 109-amino-acid polypeptide reads, in one-letter code: MEMEGQNEKKKKDEPKIENRLRRTLMLCITQPSNFRNSIWLINVRDKMRITCSTSSRSVIFFHRHSAGKQFFAYHHHYTCIMYIGLLCMFVLLYMTVIYKLEYYLLTMQ.

The helical transmembrane segment at 78–98 threads the bilayer; sequence YTCIMYIGLLCMFVLLYMTVI.

Its subcellular location is the membrane. This is an uncharacterized protein from Saccharomyces cerevisiae (strain ATCC 204508 / S288c) (Baker's yeast).